The following is a 380-amino-acid chain: Queuine tRNA-ribosyltransferase (380 aa).

Catalysis depends on Asp95, which acts as the Proton acceptor. Substrate is bound by residues 95-99 (DSGGF), Asp149, Gln192, and Gly219. An RNA binding region spans residues 250–256 (GVGSADA). The active-site Nucleophile is the Asp269. The segment at 274-278 (TRIAR) is RNA binding; important for wobble base 34 recognition. Zn(2+) is bound by residues Cys307, Cys309, Cys312, and His338.

It belongs to the queuine tRNA-ribosyltransferase family. As to quaternary structure, homodimer. Within each dimer, one monomer is responsible for RNA recognition and catalysis, while the other monomer binds to the replacement base PreQ1. Zn(2+) serves as cofactor.

The catalysed reaction is 7-aminomethyl-7-carbaguanine + guanosine(34) in tRNA = 7-aminomethyl-7-carbaguanosine(34) in tRNA + guanine. It functions in the pathway tRNA modification; tRNA-queuosine biosynthesis. Its function is as follows. Catalyzes the base-exchange of a guanine (G) residue with the queuine precursor 7-aminomethyl-7-deazaguanine (PreQ1) at position 34 (anticodon wobble position) in tRNAs with GU(N) anticodons (tRNA-Asp, -Asn, -His and -Tyr). Catalysis occurs through a double-displacement mechanism. The nucleophile active site attacks the C1' of nucleotide 34 to detach the guanine base from the RNA, forming a covalent enzyme-RNA intermediate. The proton acceptor active site deprotonates the incoming PreQ1, allowing a nucleophilic attack on the C1' of the ribose to form the product. After dissociation, two additional enzymatic reactions on the tRNA convert PreQ1 to queuine (Q), resulting in the hypermodified nucleoside queuosine (7-(((4,5-cis-dihydroxy-2-cyclopenten-1-yl)amino)methyl)-7-deazaguanosine). The sequence is that of Queuine tRNA-ribosyltransferase from Lactiplantibacillus plantarum (strain ATCC BAA-793 / NCIMB 8826 / WCFS1) (Lactobacillus plantarum).